A 554-amino-acid chain; its full sequence is Serine/threonine-protein kinase ROP18 (554 aa).

The chain crosses the membrane as a helical span at residues 17–40 (GLATLLPKTACLAGLNVALVFLLF). The region spanning 252 to 531 (LVRGAPLGSG…PLQALETAAF (280 aa)) is the Protein kinase domain. Residues G262, A264, and K281 each contribute to the ATP site. An N-linked (GlcNAc...) asparagine glycan is attached at N306. ATP contacts are provided by M357, A359, and D362. An N-linked (GlcNAc...) asparagine glycan is attached at N377. The active-site Proton acceptor is the D409. Residue D427 coordinates ATP. D427 contacts Mg(2+). Residue N434 is glycosylated (N-linked (GlcNAc...) asparagine). Residues C478 and C497 are joined by a disulfide bond.

It belongs to the protein kinase superfamily. Ser/Thr protein kinase family. Component of a complex at least composed of ROP18, GRA7 and ROP2. Component of a complex at least composed of ROP18 and ROP5. Interacts with GRA7 in the absence of ROP5. Interacts with mouse IRGB6 (TGTP1/TGTP2).

Its subcellular location is the parasitophorous vacuole membrane. It is found in the cytoplasmic vesicle. The protein localises to the secretory vesicle. It localises to the rhoptry. The catalysed reaction is L-threonyl-[protein] + ATP = O-phospho-L-threonyl-[protein] + ADP + H(+). The enzyme catalyses L-seryl-[protein] + ATP = O-phospho-L-seryl-[protein] + ADP + H(+). Kinase activity is enhanced by polymorphic pseudokinase ROP5. In terms of biological role, protein kinase. Virulence factor. Mediates parasite survival in mouse macrophages and monocytes. Reduces the accumulation of mouse IRGA6 (IIGP1) and IRGB6 (TGTP1/TGTP2), immunity-related GTPases (IRGs) that protect mice from infection by certain intracellular pathogens, on the parasitophorous vacuole and IRG-mediated killing of parasites by mouse cells; probably in connection with ROP5. In complex with GRA7, targets IRGs to prevent IRG-mediated parasite killing by mouse cells. Phosphorylates mouse IRGA6 (IIGP1); its activity toward mouse IRGA6 is promoted by GRA7 or ROP5. Phosphorylates mouse IRGB6 (TGTP1/TGTP2). Phosphorylates mouse IRGB10 (GM12250). Does not affect IFN-gamma (IFNG)-mediated parasite killing in human cells that do not possess the large variety of IRGs. This Toxoplasma gondii protein is Serine/threonine-protein kinase ROP18.